Reading from the N-terminus, the 71-residue chain is Small ribosomal subunit protein eS17 (71 aa).

Belongs to the eukaryotic ribosomal protein eS17 family.

This is Small ribosomal subunit protein eS17 from Pyrobaculum islandicum (strain DSM 4184 / JCM 9189 / GEO3).